We begin with the raw amino-acid sequence, 810 residues long: Zinc finger CCCH domain-containing protein 11A (810 aa).

3 C3H1-type zinc fingers span residues 2–29, 31–57, and 60–86; these read PNQG…HCEA, IGNE…HMEI, and KRSE…HHNR. Ser-108 carries the phosphoserine modification. Residues Lys-114 and Lys-124 each participate in a glycyl lysine isopeptide (Lys-Gly) (interchain with G-Cter in SUMO2) cross-link. At Ser-132 the chain carries Phosphoserine. Disordered regions lie at residues 139 to 194, 223 to 258, 285 to 351, and 367 to 432; these read MKVE…GLRV, KKMK…ENVR, GKRK…DKVN, and ERAS…TTCI. Residue Lys-140 forms a Glycyl lysine isopeptide (Lys-Gly) (interchain with G-Cter in SUMO2) linkage. Ser-149 and Ser-171 each carry phosphoserine. A compositionally biased stretch (acidic residues) spans 160–175; the sequence is ADDDEDDDDQFSEEGD. At Ser-290 the chain carries Phosphoserine. Composition is skewed to basic and acidic residues over residues 309 to 322 and 367 to 390; these read KKVE…DKTP and ERAS…KTDD. Thr-321 bears the Phosphothreonine mark. A coiled-coil region spans residues 362-423; that stretch reads EEILLERASQ…KHRQQEAERQ (62 aa). At Ser-370 the chain carries Phosphoserine. Positions 391–402 are enriched in polar residues; the sequence is STSGARSSSTIR. The span at 417 to 432 shows a compositional bias: basic and acidic residues; sequence QQEAERQKSKKDTTCI. Lys-478 participates in a covalent cross-link: Glycyl lysine isopeptide (Lys-Gly) (interchain with G-Cter in SUMO2). The interval 482-549 is disordered; the sequence is ALRVQQSSES…KEASGETTGV (68 aa). Residues 486–498 are compositionally biased toward low complexity; that stretch reads QQSSESSTSSPSQ. A Glycyl lysine isopeptide (Lys-Gly) (interchain with G-Cter in SUMO2) cross-link involves residue Lys-619. The interval 715-768 is disordered; sequence TVPEAENPRDSLVLPPTQSSSDSSPPEVSGPSSSQMSMKTRRLSSASTGKPPLS. The segment covering 729 to 748 has biased composition (low complexity); sequence PPTQSSSDSSPPEVSGPSSS. A compositionally biased stretch (polar residues) spans 749-762; the sequence is QMSMKTRRLSSAST.

Interacts with TREX complex components THOC2, DDX39 and POLDIP3; the interactions are ATP-dependent. Interacts with PABPN1; this interaction retains ZC3H11A in nuclear speckles. Interacts with KPNA3.

Its subcellular location is the nucleus. It localises to the nucleus speckle. Functionally, through its association with TREX complex components, may participate in the export and post-transcriptional coordination of selected mRNA transcripts, including those required to maintain the metabolic processes in embryonic cells. Binds RNA. In terms of biological role, (Microbial infection) Plays a role in efficient growth of several nuclear-replicating viruses such as HIV-1, influenza virus or herpes simplex virus 1/HHV-1. Required for efficient viral mRNA export. May be required for proper polyadenylation of adenovirus type 5/HAdV-5 capsid mRNA. This chain is Zinc finger CCCH domain-containing protein 11A (ZC3H11A), found in Homo sapiens (Human).